Reading from the N-terminus, the 611-residue chain is Brain-enriched guanylate kinase-associated protein (611 aa).

Tyr156 bears the Phosphotyrosine mark. Residues Ser219, Ser248, and Ser265 each carry the phosphoserine modification. Thr268 bears the Phosphothreonine mark. Phosphoserine occurs at positions 284, 364, and 391. The residue at position 399 (Arg399) is an Asymmetric dimethylarginine. Residues Ser474, Ser484, Ser494, Ser496, Ser519, Ser521, and Ser525 each carry the phosphoserine modification. Residues 520–611 form a disordered region; it reads LSPSRSADPL…KAQLYGTLLN (92 aa). Positions 554–563 are enriched in basic and acidic residues; the sequence is EPEHGSRDSL. 2 positions are modified to phosphoserine: Ser571 and Ser581.

Interacts with DLG4 and DLGAP1 and forms a ternary complex. Brain-specific. Expressed in neurons and rather enriched at synaptic junctions.

The protein resides in the cytoplasm. Its subcellular location is the membrane. In terms of biological role, may sustain the structure of the postsynaptic density (PSD). The chain is Brain-enriched guanylate kinase-associated protein (Begain) from Rattus norvegicus (Rat).